The following is a 431-amino-acid chain: 2-oxoisovalerate dehydrogenase subunit alpha, mitochondrial (431 aa).

140-142 (QYR) serves as a coordination point for thiamine diphosphate. Positions 189, 194, and 195 each coordinate K(+).

Belongs to the BCKDHA family. Requires thiamine diphosphate as cofactor.

The protein resides in the mitochondrion matrix. It catalyses the reaction N(6)-[(R)-lipoyl]-L-lysyl-[protein] + 3-methyl-2-oxobutanoate + H(+) = N(6)-[(R)-S(8)-2-methylpropanoyldihydrolipoyl]-L-lysyl-[protein] + CO2. It participates in lipid metabolism; fatty acid biosynthesis. The branched-chain alpha-keto dehydrogenase complex catalyzes the overall conversion of alpha-keto acids to acyl-CoA and CO(2). It contains multiple copies of three enzymatic components: branched-chain alpha-keto acid decarboxylase (E1), lipoamide acyltransferase (E2) and lipoamide dehydrogenase (E3). Required for the production of the monomethyl branched-chain fatty acids (mmBCFAs) isopentadecanoate (C15iso) and isoheptadecanoate (C17iso). The sequence is that of 2-oxoisovalerate dehydrogenase subunit alpha, mitochondrial from Caenorhabditis elegans.